Reading from the N-terminus, the 193-residue chain is Ion-translocating oxidoreductase complex subunit A (193 aa).

Helical transmembrane passes span 5–25 (LLIL…FLGL), 38–58 (AMGM…CSYL), 65–85 (APLG…AVVV), 102–122 (VLGI…VALL), 134–154 (ILYG…FSAM), and 171–191 (AIGM…TGLV).

It belongs to the NqrDE/RnfAE family. The complex is composed of six subunits: RnfA, RnfB, RnfC, RnfD, RnfE and RnfG.

It localises to the cell inner membrane. Part of a membrane-bound complex that couples electron transfer with translocation of ions across the membrane. This chain is Ion-translocating oxidoreductase complex subunit A, found in Hahella chejuensis (strain KCTC 2396).